We begin with the raw amino-acid sequence, 71 residues long: Phosphatidylinositol N-acetylglucosaminyltransferase subunit Y (71 aa).

Methionine 1 is a topological domain (cytoplasmic). The chain crosses the membrane as a helical span at residues 2 to 21 (FFSLPVLTVLIPLVSLTGLL). Topologically, residues 22–44 (YSASVEEDFPNGCTSTASLCFYS) are lumenal. Residues 45–65 (LLLPITLPVYVFFHLWTWMGL) traverse the membrane as a helical segment. Residues 66–71 (KLFRHN) are Cytoplasmic-facing.

Component of the glycosylphosphatidylinositol-N-acetylglucosaminyltransferase (GPI-GnT) complex composed at least by PIGA, PIGC, PIGH, PIGP, PIGQ, PIGY and DPM2.

The protein localises to the endoplasmic reticulum membrane. It participates in glycolipid biosynthesis; glycosylphosphatidylinositol-anchor biosynthesis. In terms of biological role, part of the glycosylphosphatidylinositol-N-acetylglucosaminyltransferase (GPI-GnT) complex that catalyzes the transfer of N-acetylglucosamine from UDP-N-acetylglucosamine to phosphatidylinositol and participates in the first step of GPI biosynthesis. May act by regulating the catalytic subunit PIGA. The chain is Phosphatidylinositol N-acetylglucosaminyltransferase subunit Y from Xenopus tropicalis (Western clawed frog).